Consider the following 435-residue polypeptide: Minor fimbrial subunit HifE (435 aa).

Residues 1–31 (MKTLTTYAKYFTPISKIAFLFCFLMGNIAEA) form the signal peptide.

It belongs to the fimbrial protein family.

It localises to the fimbrium. May be a minor structural protein required for pilus biogenesis. May be the adhesive component in the pili. The chain is Minor fimbrial subunit HifE (hifE) from Haemophilus influenzae.